The sequence spans 122 residues: Large ribosomal subunit protein uL14 (122 aa).

It belongs to the universal ribosomal protein uL14 family. As to quaternary structure, part of the 50S ribosomal subunit. Forms a cluster with proteins L3 and L19. In the 70S ribosome, L14 and L19 interact and together make contacts with the 16S rRNA in bridges B5 and B8.

Its function is as follows. Binds to 23S rRNA. Forms part of two intersubunit bridges in the 70S ribosome. The protein is Large ribosomal subunit protein uL14 of Carboxydothermus hydrogenoformans (strain ATCC BAA-161 / DSM 6008 / Z-2901).